Consider the following 145-residue polypeptide: Bacilliredoxin SERP1075 (145 aa).

The protein belongs to the bacilliredoxin family.

The chain is Bacilliredoxin SERP1075 from Staphylococcus epidermidis (strain ATCC 35984 / DSM 28319 / BCRC 17069 / CCUG 31568 / BM 3577 / RP62A).